Consider the following 658-residue polypeptide: Glycogen debranching enzyme (658 aa).

D335 serves as the catalytic Nucleophile. E370 serves as the catalytic Proton donor.

This sequence belongs to the glycosyl hydrolase 13 family.

It carries out the reaction Hydrolysis of (1-&gt;6)-alpha-D-glucosidic linkages to branches with degrees of polymerization of three or four glucose residues in limit dextrin.. It participates in glycan degradation; glycogen degradation. In terms of biological role, removes maltotriose and maltotetraose chains that are attached by 1,6-alpha-linkage to the limit dextrin main chain, generating a debranched limit dextrin. The sequence is that of Glycogen debranching enzyme from Erwinia tasmaniensis (strain DSM 17950 / CFBP 7177 / CIP 109463 / NCPPB 4357 / Et1/99).